Consider the following 93-residue polypeptide: UPF0358 protein lin1058 (93 aa).

Belongs to the UPF0358 family.

This is UPF0358 protein lin1058 from Listeria innocua serovar 6a (strain ATCC BAA-680 / CLIP 11262).